A 455-amino-acid chain; its full sequence is Bifunctional protein GlmU (455 aa).

Positions 1 to 225 (MNIVILAAGM…EWETLGVNSK (225 aa)) are pyrophosphorylase. UDP-N-acetyl-alpha-D-glucosamine is bound by residues 6–9 (LAAG), Lys-20, Gln-71, 76–77 (GT), 98–100 (YGD), Gly-135, Glu-150, Asn-165, and Asn-223. Residue Asp-100 participates in Mg(2+) binding. Residue Asn-223 coordinates Mg(2+). The linker stretch occupies residues 226–246 (VQLAELERIHQRNLAQQLLED). The tract at residues 247 to 455 (GVTLIDPARI…QRPVKQKKEG (209 aa)) is N-acetyltransferase. Residues Arg-329 and Lys-347 each contribute to the UDP-N-acetyl-alpha-D-glucosamine site. His-359 functions as the Proton acceptor in the catalytic mechanism. 2 residues coordinate UDP-N-acetyl-alpha-D-glucosamine: Tyr-362 and Asn-373. Acetyl-CoA contacts are provided by residues Ala-376, 382–383 (NY), Ser-401, Ala-419, and Arg-436.

The protein in the N-terminal section; belongs to the N-acetylglucosamine-1-phosphate uridyltransferase family. In the C-terminal section; belongs to the transferase hexapeptide repeat family. Homotrimer. It depends on Mg(2+) as a cofactor.

It is found in the cytoplasm. It catalyses the reaction alpha-D-glucosamine 1-phosphate + acetyl-CoA = N-acetyl-alpha-D-glucosamine 1-phosphate + CoA + H(+). The enzyme catalyses N-acetyl-alpha-D-glucosamine 1-phosphate + UTP + H(+) = UDP-N-acetyl-alpha-D-glucosamine + diphosphate. The protein operates within nucleotide-sugar biosynthesis; UDP-N-acetyl-alpha-D-glucosamine biosynthesis; N-acetyl-alpha-D-glucosamine 1-phosphate from alpha-D-glucosamine 6-phosphate (route II): step 2/2. Its pathway is nucleotide-sugar biosynthesis; UDP-N-acetyl-alpha-D-glucosamine biosynthesis; UDP-N-acetyl-alpha-D-glucosamine from N-acetyl-alpha-D-glucosamine 1-phosphate: step 1/1. It participates in bacterial outer membrane biogenesis; LPS lipid A biosynthesis. Its function is as follows. Catalyzes the last two sequential reactions in the de novo biosynthetic pathway for UDP-N-acetylglucosamine (UDP-GlcNAc). The C-terminal domain catalyzes the transfer of acetyl group from acetyl coenzyme A to glucosamine-1-phosphate (GlcN-1-P) to produce N-acetylglucosamine-1-phosphate (GlcNAc-1-P), which is converted into UDP-GlcNAc by the transfer of uridine 5-monophosphate (from uridine 5-triphosphate), a reaction catalyzed by the N-terminal domain. This Ralstonia pickettii (strain 12J) protein is Bifunctional protein GlmU.